The chain runs to 394 residues: NAD(P)H-quinone oxidoreductase subunit H (394 aa).

It belongs to the complex I 49 kDa subunit family. As to quaternary structure, NDH-1 can be composed of about 15 different subunits; different subcomplexes with different compositions have been identified which probably have different functions.

Its subcellular location is the cellular thylakoid membrane. The enzyme catalyses a plastoquinone + NADH + (n+1) H(+)(in) = a plastoquinol + NAD(+) + n H(+)(out). The catalysed reaction is a plastoquinone + NADPH + (n+1) H(+)(in) = a plastoquinol + NADP(+) + n H(+)(out). Its function is as follows. NDH-1 shuttles electrons from an unknown electron donor, via FMN and iron-sulfur (Fe-S) centers, to quinones in the respiratory and/or the photosynthetic chain. The immediate electron acceptor for the enzyme in this species is believed to be plastoquinone. Couples the redox reaction to proton translocation, and thus conserves the redox energy in a proton gradient. Cyanobacterial NDH-1 also plays a role in inorganic carbon-concentration. The protein is NAD(P)H-quinone oxidoreductase subunit H of Nostoc sp. (strain PCC 7120 / SAG 25.82 / UTEX 2576).